The chain runs to 380 residues: Apelin receptor (380 aa).

Over 1 to 30 (MEEGGDFDNYYGADNQSECEYTDWKSSGAL) the chain is Extracellular. Asparagine 15 carries an N-linked (GlcNAc...) asparagine glycan. Cystine bridges form between cysteine 19–cysteine 281 and cysteine 102–cysteine 181. Residues 31-54 (IPAIYMLVFLLGTTGNGLVLWTVF) form a helical membrane-spanning segment. Residues 55-64 (RSSREKRRSA) lie on the Cytoplasmic side of the membrane. The helical transmembrane segment at 65–86 (DIFIASLAVADLTFVVTLPLWA) threads the bilayer. Residues 87-99 (TYTYRDYDWPFGT) are Extracellular-facing. A helical transmembrane segment spans residues 100 to 125 (FFCKLSSYLIFVNMYASVFCLTGLSF). At 126-146 (DRYLAIVRPVANARLRLRVSG) the chain is on the cytoplasmic side. A helical membrane pass occupies residues 147–164 (AVATAVLWVLAALLAMPV). Residues 165–198 (MVLRTTGDLENTTKVQCYMDYSMVATVSSEWAWE) are Extracellular-facing. Asparagine 175 carries N-linked (GlcNAc...) asparagine glycosylation. Residues 199-223 (VGLGVSSTTVGFVVPFTIMLTCYFF) form a helical membrane-spanning segment. The Cytoplasmic portion of the chain corresponds to 224–246 (IAQTIAGHFRKERIEGLRKRRRL). Residues 247 to 270 (LSIIVVLVVTFALCWMPYHLVKTL) traverse the membrane as a helical segment. The Extracellular portion of the chain corresponds to 271 to 289 (YMLGSLLHWPCDFDLFLMN). A helical membrane pass occupies residues 290–312 (IFPYCTCISYVNSCLNPFLYAFF). At 313 to 380 (DPRFRQACTS…PYSQETLVVD (68 aa)) the chain is on the cytoplasmic side. Residues 342 to 351 (KSASYSSGHS) show a composition bias toward low complexity. The interval 342-380 (KSASYSSGHSQGPGPNMGKGGEQMHEKSIPYSQETLVVD) is disordered. Residues 371-380 (PYSQETLVVD) are compositionally biased toward polar residues.

Belongs to the G-protein coupled receptor 1 family. In terms of assembly, homodimer; dimerization inhibits APLNR-mediated G protein and beta-arrestin signaling pathways compared to monomeric APLNR. In terms of tissue distribution, expressed in heart, brain, kidney, stomach, spleen, thymus, lung, ovary, small intestine and colon, adipose tissues and pancreas. Expressed in glial cells, astrocytes and neuronal subpopulations. Expressed in embryonic (ESCs) and induced (iPSCs) pluripotent stem cells.

The protein resides in the cell membrane. Its function is as follows. G protein-coupled receptor for peptide hormones apelin (APLN) and apelin receptor early endogenous ligand (APELA/ELA), that plays a role in the regulation of normal cardiovascular function and fluid homeostasis. When acting as apelin receptor, activates both G(i) protein pathway that inhibits adenylate cyclase activity, and the beta-arrestin pathway that promotes internalization of the receptor. APLNR/APJ also functions as mechanoreceptor that is activated by pathological stimuli in a G-protein-independent fashion to induce beta-arrestin signaling, hence eliciting cardiac hypertrophy. However, the presence of apelin ligand blunts cardiac hypertrophic induction from APLNR/APJ on response to pathological stimuli. Plays a key role in early development such as gastrulation, blood vessels formation and heart morphogenesis by acting as a APELA receptor. May promote angioblast migration toward the embryonic midline, i.e. the position of the future vessel formation, during vasculogenesis. Promotes sinus venosus (SV)-derived endothelial cells migration into the developing heart to promote coronary blood vessel development. Also plays a role in various processes in adults such as regulation of blood vessel formation, blood pressure, heart contractility and heart failure. Functionally, (Microbial infection) Alternative coreceptor with CD4 for HIV-1 infection; may be involved in the development of AIDS dementia. This chain is Apelin receptor, found in Homo sapiens (Human).